The following is a 291-amino-acid chain: Urease accessory protein UreD (291 aa).

Belongs to the UreD family. As to quaternary structure, ureD, UreF and UreG form a complex that acts as a GTP-hydrolysis-dependent molecular chaperone, activating the urease apoprotein by helping to assemble the nickel containing metallocenter of UreC. The UreE protein probably delivers the nickel.

It is found in the cytoplasm. Required for maturation of urease via the functional incorporation of the urease nickel metallocenter. The polypeptide is Urease accessory protein UreD (Acinetobacter baumannii (strain ATCC 17978 / DSM 105126 / CIP 53.77 / LMG 1025 / NCDC KC755 / 5377)).